A 254-amino-acid polypeptide reads, in one-letter code: Hydroxyacylglutathione hydrolase (254 aa).

The Zn(2+) site is built by H54, H56, D58, H59, H111, D130, and H168.

Belongs to the metallo-beta-lactamase superfamily. Glyoxalase II family. Monomer. Zn(2+) is required as a cofactor.

The enzyme catalyses an S-(2-hydroxyacyl)glutathione + H2O = a 2-hydroxy carboxylate + glutathione + H(+). It participates in secondary metabolite metabolism; methylglyoxal degradation; (R)-lactate from methylglyoxal: step 2/2. Thiolesterase that catalyzes the hydrolysis of S-D-lactoyl-glutathione to form glutathione and D-lactic acid. In Legionella pneumophila (strain Corby), this protein is Hydroxyacylglutathione hydrolase.